The primary structure comprises 447 residues: Tektin-4 (447 aa).

Coiled coils occupy residues K114–D143, K324–A348, and F375–L423.

Belongs to the tektin family. As to quaternary structure, microtubule inner protein component of sperm flagellar doublet microtubules. Post-translationally, ubiquitinated, leading to its degradation. Deubiquitinated by USP16, promoting its stability.

The protein resides in the cytoplasm. It is found in the cytoskeleton. The protein localises to the cilium axoneme. Its subcellular location is the flagellum axoneme. Functionally, microtubule inner protein (MIP) part of the dynein-decorated doublet microtubules (DMTs) in cilia and flagellar axoneme. Forms filamentous polymers in the walls of ciliary and flagellar microtubules. Contributes to normal sperm motility. The protein is Tektin-4 (Tekt4) of Rattus norvegicus (Rat).